The following is a 201-amino-acid chain: Imidazole glycerol phosphate synthase subunit HisH 1 (201 aa).

The 201-residue stretch at 1–201 (MIALIDYKAG…LKLLENFARL (201 aa)) folds into the Glutamine amidotransferase type-1 domain. C80 acts as the Nucleophile in catalysis. Residues H183 and E185 contribute to the active site.

As to quaternary structure, heterodimer of HisH and HisF.

It is found in the cytoplasm. The enzyme catalyses 5-[(5-phospho-1-deoxy-D-ribulos-1-ylimino)methylamino]-1-(5-phospho-beta-D-ribosyl)imidazole-4-carboxamide + L-glutamine = D-erythro-1-(imidazol-4-yl)glycerol 3-phosphate + 5-amino-1-(5-phospho-beta-D-ribosyl)imidazole-4-carboxamide + L-glutamate + H(+). The catalysed reaction is L-glutamine + H2O = L-glutamate + NH4(+). The protein operates within amino-acid biosynthesis; L-histidine biosynthesis; L-histidine from 5-phospho-alpha-D-ribose 1-diphosphate: step 5/9. IGPS catalyzes the conversion of PRFAR and glutamine to IGP, AICAR and glutamate. The HisH subunit provides the glutamine amidotransferase activity that produces the ammonia necessary to HisF for the synthesis of IGP and AICAR. This Campylobacter jejuni subsp. jejuni serotype O:23/36 (strain 81-176) protein is Imidazole glycerol phosphate synthase subunit HisH 1 (hisH1).